Reading from the N-terminus, the 408-residue chain is Na(+)-translocating NADH-quinone reductase subunit F (408 aa).

A helical transmembrane segment spans residues 6–26 (IILGVVMFTAIVLALVAIILA). Positions 35–127 (GDVTIRINGE…DMDVEVPEEV (93 aa)) constitute a 2Fe-2S ferredoxin-type domain. [2Fe-2S] cluster-binding residues include Cys-70, Cys-76, Cys-79, and Cys-111. The FAD-binding FR-type domain maps to 130 to 270 (VKAWECTVES…YGPFGEFFAK (141 aa)).

It belongs to the NqrF family. In terms of assembly, composed of six subunits; NqrA, NqrB, NqrC, NqrD, NqrE and NqrF. The cofactor is [2Fe-2S] cluster. Requires FAD as cofactor.

It is found in the cell inner membrane. It catalyses the reaction a ubiquinone + n Na(+)(in) + NADH + H(+) = a ubiquinol + n Na(+)(out) + NAD(+). Functionally, NQR complex catalyzes the reduction of ubiquinone-1 to ubiquinol by two successive reactions, coupled with the transport of Na(+) ions from the cytoplasm to the periplasm. The first step is catalyzed by NqrF, which accepts electrons from NADH and reduces ubiquinone-1 to ubisemiquinone by a one-electron transfer pathway. The polypeptide is Na(+)-translocating NADH-quinone reductase subunit F (Marinomonas sp. (strain MWYL1)).